A 166-amino-acid polypeptide reads, in one-letter code: Small ribosomal subunit protein uS5 (166 aa).

The region spanning 11-74 (LQEKLIAVNR…EKARRNMINV (64 aa)) is the S5 DRBM domain.

The protein belongs to the universal ribosomal protein uS5 family. In terms of assembly, part of the 30S ribosomal subunit. Contacts proteins S4 and S8.

With S4 and S12 plays an important role in translational accuracy. Functionally, located at the back of the 30S subunit body where it stabilizes the conformation of the head with respect to the body. The protein is Small ribosomal subunit protein uS5 of Cronobacter sakazakii (strain ATCC BAA-894) (Enterobacter sakazakii).